Here is a 285-residue protein sequence, read N- to C-terminus: 2-dehydro-3-deoxyphosphooctonate aldolase (285 aa).

Belongs to the KdsA family.

Its subcellular location is the cytoplasm. The enzyme catalyses D-arabinose 5-phosphate + phosphoenolpyruvate + H2O = 3-deoxy-alpha-D-manno-2-octulosonate-8-phosphate + phosphate. It functions in the pathway carbohydrate biosynthesis; 3-deoxy-D-manno-octulosonate biosynthesis; 3-deoxy-D-manno-octulosonate from D-ribulose 5-phosphate: step 2/3. Its pathway is bacterial outer membrane biogenesis; lipopolysaccharide biosynthesis. The polypeptide is 2-dehydro-3-deoxyphosphooctonate aldolase (Paracidovorax citrulli (strain AAC00-1) (Acidovorax citrulli)).